A 62-amino-acid chain; its full sequence is Protein DsrB (62 aa).

This sequence belongs to the DsrB family.

This is Protein DsrB from Escherichia fergusonii (strain ATCC 35469 / DSM 13698 / CCUG 18766 / IAM 14443 / JCM 21226 / LMG 7866 / NBRC 102419 / NCTC 12128 / CDC 0568-73).